We begin with the raw amino-acid sequence, 301 residues long: MVFVKSSKSNAYFKRYQVKFRRRRDGKTDYRARIRLINQDKNKYNTPKYRFVVRFTNKDIVAQIVSASIAGDIVKASAYAHELPQYGLTVGLTNYAAAYCTGLLLARRVLKMLEMDDEYEGNVEATGEDFSVEPTDSRRPFRALLDVGLIRTTTGNRVFGALKGALDGGLDIPHSDKRFAGFHKENKQLDAEIHRNYIYGGHVSNYMKLLGEDEPEKLQTHFSAYIKKGVEAESIEEMYKKVHAAIRAEPNHKKTEKSAPKEHKRYNLKKLTYEERKNKLIERVKALNGAGGDDDDEDDEE.

Residues 247–267 form a disordered region; that stretch reads RAEPNHKKTEKSAPKEHKRYN. Positions 249–261 are enriched in basic and acidic residues; the sequence is EPNHKKTEKSAPK.

Belongs to the universal ribosomal protein uL18 family. Component of the large ribosomal subunit (LSU).

Its subcellular location is the cytoplasm. It is found in the nucleus. The protein localises to the nucleolus. The protein resides in the nucleoplasm. Component of the ribosome, a large ribonucleoprotein complex responsible for the synthesis of proteins in the cell. The small ribosomal subunit (SSU) binds messenger RNAs (mRNAs) and translates the encoded message by selecting cognate aminoacyl-transfer RNA (tRNA) molecules. The large subunit (LSU) contains the ribosomal catalytic site termed the peptidyl transferase center (PTC), which catalyzes the formation of peptide bonds, thereby polymerizing the amino acids delivered by tRNAs into a polypeptide chain. The nascent polypeptides leave the ribosome through a tunnel in the LSU and interact with protein factors that function in enzymatic processing, targeting, and the membrane insertion of nascent chains at the exit of the ribosomal tunnel. Seems involved in the regulation of cell proliferation. Essential in leaf polarity establishment, probably having a role for translation in leaf dorsoventral patterning to specify leaf adaxial identity. The protein is Large ribosomal subunit protein uL18y of Arabidopsis thaliana (Mouse-ear cress).